We begin with the raw amino-acid sequence, 312 residues long: Ribosomal RNA small subunit methyltransferase H (312 aa).

S-adenosyl-L-methionine is bound by residues 34 to 36 (AGH), D54, F81, D102, and Q109.

This sequence belongs to the methyltransferase superfamily. RsmH family.

The protein resides in the cytoplasm. The catalysed reaction is cytidine(1402) in 16S rRNA + S-adenosyl-L-methionine = N(4)-methylcytidine(1402) in 16S rRNA + S-adenosyl-L-homocysteine + H(+). Its function is as follows. Specifically methylates the N4 position of cytidine in position 1402 (C1402) of 16S rRNA. In Geotalea daltonii (strain DSM 22248 / JCM 15807 / FRC-32) (Geobacter daltonii), this protein is Ribosomal RNA small subunit methyltransferase H.